Reading from the N-terminus, the 82-residue chain is uncharacterized protein (82 aa).

The tract at residues 60-82 (YKRRRPDHMMKRNSPSYTGDHKT) is disordered.

This is an uncharacterized protein from Saccharomyces cerevisiae (strain ATCC 204508 / S288c) (Baker's yeast).